A 67-amino-acid polypeptide reads, in one-letter code: MARITVEDCLLQIPNRFQLVLAATYRARMLSQGHAPKIESKNKPAVTALREIAEGKIGLEMLKKVPG.

The protein belongs to the RNA polymerase subunit omega family. In terms of assembly, the RNAP catalytic core consists of 2 alpha, 1 beta, 1 beta' and 1 omega subunit. When a sigma factor is associated with the core the holoenzyme is formed, which can initiate transcription.

The enzyme catalyses RNA(n) + a ribonucleoside 5'-triphosphate = RNA(n+1) + diphosphate. Promotes RNA polymerase assembly. Latches the N- and C-terminal regions of the beta' subunit thereby facilitating its interaction with the beta and alpha subunits. In Variovorax paradoxus (strain S110), this protein is DNA-directed RNA polymerase subunit omega.